Here is a 609-residue protein sequence, read N- to C-terminus: Sterol O-acyltransferase 2 (609 aa).

Residues 1-15 (MGRTNTSDQLNAISD) are compositionally biased toward polar residues. Positions 1 to 41 (MGRTNTSDQLNAISDKNTKRKSLALDNEYHNNSSSEDDSSK) are disordered. Transmembrane regions (helical) follow at residues 152 to 172 (FFGM…NNLI), 195 to 215 (LFKV…AFFV), 229 to 249 (VGWW…LWIA), 253 to 273 (CLDF…VFIM), 402 to 422 (WSYV…MILI), and 451 to 471 (FLLM…FFLI). Positions 490–496 (FYGPWWS) match the FYXDWWN motif motif. Transmembrane regions (helical) follow at residues 534–554 (AAII…YVIF) and 589–609 (IICW…YLVF). Residue H546 is part of the active site.

This sequence belongs to the membrane-bound acyltransferase family. Sterol o-acyltransferase subfamily.

The protein resides in the endoplasmic reticulum membrane. Its activity is regulated as follows. Inhibited by the protoberberine derivative HWY-289 in a non-competitive manner. Inhibited by miconazole. Not inhibited by CI-976, polyoxin D, amphotericin B or nikkomycin Z. In terms of biological role, sterol O-acyltransferase that catalyzes the formation of stery esters. This chain is Sterol O-acyltransferase 2, found in Candida albicans (Yeast).